The sequence spans 426 residues: MSTEAPVLGILCGGGPAPGLNGVIAGATLYALRLGWKVIGFMEGFKYLCTGDVDVVKAHTIDLTYDIVSRIHFQGGTIIQTSRANPRKSPELQENVRKCLRALKVRYFLTIGGDDTASSAVSVASGMNGNEISVISCPKTIDNDLPLPADQSTFGFHTARSLGMEIIRNLMVDSKSAPRWFLVEAMGRSAGHLALGMAEASGAHLCLIPEEFKQDEIEFEDVVELVEATILKRLAYGKNYGVCVLAEGLVSKMSKKALYKLFGNREPPTDPHGHILLDDAELARSLSEELLKRLGNLGIRITPKKIGYELRCADPVAFDAVYTRELGYGAIDAFLNGHSAALIVRENGQVKPVQFKDLLDPATGRVRTRLVDVTSQSFKVARVYMWRMSKKDYENKDLVARVAAAGKMTPEAFTEKFAHLTDVVVE.

G15 is a diphosphate binding site. D114 is a binding site for Mg(2+). Residues 140–142 (TID), 186–188 (MGR), E247, and 308–311 (YELR) contribute to the substrate site. The Proton acceptor role is filled by D142.

It belongs to the phosphofructokinase type A (PFKA) family. PPi-dependent PFK group II subfamily. Clade 'Short' sub-subfamily. In terms of assembly, homotetramer. Requires Mg(2+) as cofactor.

The protein localises to the cytoplasm. It catalyses the reaction beta-D-fructose 6-phosphate + diphosphate = beta-D-fructose 1,6-bisphosphate + phosphate + H(+). It participates in carbohydrate degradation; glycolysis; D-glyceraldehyde 3-phosphate and glycerone phosphate from D-glucose: step 3/4. Non-allosteric. Catalyzes the phosphorylation of D-fructose 6-phosphate, the first committing step of glycolysis. Uses inorganic phosphate (PPi) as phosphoryl donor instead of ATP like common ATP-dependent phosphofructokinases (ATP-PFKs), which renders the reaction reversible, and can thus function both in glycolysis and gluconeogenesis. Consistently, PPi-PFK can replace the enzymes of both the forward (ATP-PFK) and reverse (fructose-bisphosphatase (FBPase)) reactions. The chain is Pyrophosphate--fructose 6-phosphate 1-phosphotransferase 1 (Pfk1) from Trichomonas vaginalis (strain ATCC PRA-98 / G3).